Reading from the N-terminus, the 962-residue chain is Leucine--tRNA ligase (962 aa).

A 'HIGH' region motif is present at residues 68–79 (PYPSGAGLHVGH). The interval 559–582 (DYSPRTFDPDDANTSPETPLSRNE) is disordered. Residues 570–579 (ANTSPETPLS) show a composition bias toward polar residues. Residues 733-737 (KMGKS) carry the 'KMSKS' region motif. An ATP-binding site is contributed by K736.

This sequence belongs to the class-I aminoacyl-tRNA synthetase family.

The protein resides in the cytoplasm. It catalyses the reaction tRNA(Leu) + L-leucine + ATP = L-leucyl-tRNA(Leu) + AMP + diphosphate. In Streptomyces avermitilis (strain ATCC 31267 / DSM 46492 / JCM 5070 / NBRC 14893 / NCIMB 12804 / NRRL 8165 / MA-4680), this protein is Leucine--tRNA ligase.